Here is a 193-residue protein sequence, read N- to C-terminus: NADH-quinone oxidoreductase subunit B (193 aa).

4 residues coordinate [4Fe-4S] cluster: Cys72, Cys73, Cys137, and Cys167.

Belongs to the complex I 20 kDa subunit family. In terms of assembly, NDH-1 is composed of 14 different subunits. Subunits NuoB, C, D, E, F, and G constitute the peripheral sector of the complex. [4Fe-4S] cluster serves as cofactor.

The protein localises to the cell inner membrane. It carries out the reaction a quinone + NADH + 5 H(+)(in) = a quinol + NAD(+) + 4 H(+)(out). Functionally, NDH-1 shuttles electrons from NADH, via FMN and iron-sulfur (Fe-S) centers, to quinones in the respiratory chain. The immediate electron acceptor for the enzyme in this species is believed to be ubiquinone. Couples the redox reaction to proton translocation (for every two electrons transferred, four hydrogen ions are translocated across the cytoplasmic membrane), and thus conserves the redox energy in a proton gradient. The polypeptide is NADH-quinone oxidoreductase subunit B (Bartonella quintana (strain Toulouse) (Rochalimaea quintana)).